Reading from the N-terminus, the 375-residue chain is Protein MGF 360-5L (375 aa).

The protein belongs to the asfivirus MGF 360 family.

Its function is as follows. Plays a role in virus cell tropism, and may be required for efficient virus replication in macrophages. This chain is Protein MGF 360-5L, found in African swine fever virus (isolate Portugal/Lis 57/1957) (ASFV).